Here is a 328-residue protein sequence, read N- to C-terminus: Gonadotropin-releasing hormone receptor (328 aa).

Residues 1 to 38 are Extracellular-facing; it reads MQDDTSSEQNPTHCSAINSSVPLVQGALPTLTLSGKIR. Asn-18 is a glycosylation site (N-linked (GlcNAc...) asparagine). The chain crosses the membrane as a helical span at residues 39 to 59; the sequence is VTVTFFLFLVSTTLNASFLLK. Topologically, residues 60–84 are cytoplasmic; that stretch reads LQKWTQKKEKGKKLSRMKVLLKHLT. The helical transmembrane segment at 85-105 threads the bilayer; that stretch reads LANLLETLIVMPLDGMWNITV. The Extracellular segment spans residues 106-115; sequence QWYAGELLCK. Cys-114 and Cys-196 are disulfide-bonded. A helical membrane pass occupies residues 116–136; that stretch reads ILSYLKLFSMYAPAFMMVVIS. Residues 137–160 are Cytoplasmic-facing; that stretch reads LDRSMAITRPLPVQSNRKLEQSMT. The chain crosses the membrane as a helical span at residues 161–181; that stretch reads GLAWGLSSVLAGPQLYIFKMI. The Extracellular segment spans residues 182–208; the sequence is HLENGPGQTEVFSQCVTHCSFPQWWHQ. A helical transmembrane segment spans residues 209 to 229; sequence AFYNFFTFICLFIIPLLIMLI. At 230-271 the chain is on the cytoplasmic side; it reads CNAKIIFTLTQVLQQDSNKLQLNQSKNNIPRARLRTLKMTVA. A helical membrane pass occupies residues 272-292; that stretch reads FAASFIVCWTPYYVLGLWYWF. Residues 293-306 lie on the Extracellular side of the membrane; that stretch reads DPGMLHRMSEPVNH. The helical transmembrane segment at 307–327 threads the bilayer; the sequence is FFFLFAFLNPCFDPLIYGYFS. Residue Leu-328 is a topological domain, cytoplasmic.

It belongs to the G-protein coupled receptor 1 family.

It localises to the cell membrane. Its function is as follows. Receptor for gonadotropin releasing hormone (GnRH) that mediates the action of GnRH to stimulate the secretion of the gonadotropic hormones luteinizing hormone (LH) and follicle-stimulating hormone (FSH). This receptor mediates its action by association with G-proteins that activate a phosphatidylinositol-calcium second messenger system. The sequence is that of Gonadotropin-releasing hormone receptor (GNRHR) from Cavia porcellus (Guinea pig).